A 63-amino-acid polypeptide reads, in one-letter code: ATP synthase F(0) complex subunit 8 (63 aa).

Residues 8–24 (TWFLTILSVMLTLFTLL) traverse the membrane as a helical segment. Lys57 carries the N6-acetyllysine modification.

The protein belongs to the ATPase protein 8 family. In terms of assembly, component of the ATP synthase complex composed at least of ATP5F1A/subunit alpha, ATP5F1B/subunit beta, ATP5MC1/subunit c (homooctomer), MT-ATP6/subunit a, MT-ATP8/subunit 8, ATP5ME/subunit e, ATP5MF/subunit f, ATP5MG/subunit g, ATP5MK/subunit k, ATP5MJ/subunit j, ATP5F1C/subunit gamma, ATP5F1D/subunit delta, ATP5F1E/subunit epsilon, ATP5PF/subunit F6, ATP5PB/subunit b, ATP5PD/subunit d, ATP5PO/subunit OSCP. ATP synthase complex consists of a soluble F(1) head domain (subunits alpha(3) and beta(3)) - the catalytic core - and a membrane F(0) domain - the membrane proton channel (subunits c, a, 8, e, f, g, k and j). These two domains are linked by a central stalk (subunits gamma, delta, and epsilon) rotating inside the F1 region and a stationary peripheral stalk (subunits F6, b, d, and OSCP). Interacts with PRICKLE3.

It localises to the mitochondrion membrane. Its function is as follows. Subunit 8, of the mitochondrial membrane ATP synthase complex (F(1)F(0) ATP synthase or Complex V) that produces ATP from ADP in the presence of a proton gradient across the membrane which is generated by electron transport complexes of the respiratory chain. ATP synthase complex consist of a soluble F(1) head domain - the catalytic core - and a membrane F(1) domain - the membrane proton channel. These two domains are linked by a central stalk rotating inside the F(1) region and a stationary peripheral stalk. During catalysis, ATP synthesis in the catalytic domain of F(1) is coupled via a rotary mechanism of the central stalk subunits to proton translocation. In vivo, can only synthesize ATP although its ATP hydrolase activity can be activated artificially in vitro. Part of the complex F(0) domain. The polypeptide is ATP synthase F(0) complex subunit 8 (Physeter macrocephalus (Sperm whale)).